Consider the following 390-residue polypeptide: Probable galacturonosyltransferase-like 9 (390 aa).

Residues 1–10 (MRLRFPMKSA) lie on the Cytoplasmic side of the membrane. A helical; Signal-anchor for type II membrane protein transmembrane segment spans residues 11–31 (VLAFAIFLVFIPLFSVGIRMI). At 32 to 390 (PGRLTAVSAT…SELTEDSSFF (359 aa)) the chain is on the lumenal side. N-linked (GlcNAc...) asparagine glycosylation is found at asparagine 205 and asparagine 223.

This sequence belongs to the glycosyltransferase 8 family.

It localises to the golgi apparatus membrane. It functions in the pathway glycan metabolism; pectin biosynthesis. In terms of biological role, may be involved in pectin and/or xylans biosynthesis in cell walls. This is Probable galacturonosyltransferase-like 9 (GATL9) from Arabidopsis thaliana (Mouse-ear cress).